A 317-amino-acid chain; its full sequence is Protoheme IX farnesyltransferase (317 aa).

The next 7 membrane-spanning stretches (helical) occupy residues 33-53, 54-74, 117-137, 154-174, 181-201, 242-262, and 285-305; these read VMSL…GEIN, PILG…SGAL, VILG…TIFF, IVIG…CVTG, VILF…LALF, FFTG…SAIF, and MFAY…ADHF.

Belongs to the UbiA prenyltransferase family. Protoheme IX farnesyltransferase subfamily.

The protein resides in the cell inner membrane. It catalyses the reaction heme b + (2E,6E)-farnesyl diphosphate + H2O = Fe(II)-heme o + diphosphate. Its pathway is porphyrin-containing compound metabolism; heme O biosynthesis; heme O from protoheme: step 1/1. Functionally, converts heme B (protoheme IX) to heme O by substitution of the vinyl group on carbon 2 of heme B porphyrin ring with a hydroxyethyl farnesyl side group. The protein is Protoheme IX farnesyltransferase of Agrobacterium fabrum (strain C58 / ATCC 33970) (Agrobacterium tumefaciens (strain C58)).